A 311-amino-acid chain; its full sequence is Geranylgeranyl transferase type-2 subunit alpha (311 aa).

Positions 12 to 43 (EKAKAQRLKELEKIESYNKLVKSFEELREKQN) form a coiled coil. PFTA repeat units lie at residues 49-82 (ISLSVSKLVLIENPEFYTIWNYRRLAILQFTETK), 93-126 (NEMKFLEECIQRFTKSYWIWFHRQWIALRMDNCD), 129-162 (REMKLCTKLLNFDLRNFHCWGHRRFILKHSNIKL), 164-197 (DELKYTTEKVEQNFSNYSAWHQRSSILPKIYKEP), and 206-239 (EEFELVRNAVYTEPKDSSSWIYHKWLVATIKSIP).

Belongs to the protein prenyltransferase subunit alpha family. As to quaternary structure, heterodimer of an alpha and a beta subunit.

The catalysed reaction is geranylgeranyl diphosphate + L-cysteinyl-[protein] = S-geranylgeranyl-L-cysteinyl-[protein] + diphosphate. Catalyzes the transfer of a geranylgeranyl moiety from geranylgeranyl diphosphate to proteins with a C-terminal sequence motif -XCC or -XCXC, where both cysteines may become modified. The protein is Geranylgeranyl transferase type-2 subunit alpha (rabggta) of Dictyostelium discoideum (Social amoeba).